A 213-amino-acid chain; its full sequence is Glycerol-3-phosphate acyltransferase (213 aa).

Transmembrane regions (helical) follow at residues 3–23 (ILLLILIAYLLGSIQTGLWIG), 55–75 (ITFLVDMLKGTLAVLLPIWLG), 80–100 (SPLIIGFFAIIGHVFPFFTGF), 110–130 (AGVLLGFVPLYFVFLLLVFAL), 142–162 (SITAAVVGLITLATFPAIHFL), and 163–183 (LDGYDPIFSAVLIIIALVIIF).

This sequence belongs to the PlsY family. Probably interacts with PlsX.

The protein resides in the cell membrane. It catalyses the reaction an acyl phosphate + sn-glycerol 3-phosphate = a 1-acyl-sn-glycero-3-phosphate + phosphate. It participates in lipid metabolism; phospholipid metabolism. Its function is as follows. Catalyzes the transfer of an acyl group from acyl-phosphate (acyl-PO(4)) to glycerol-3-phosphate (G3P) to form lysophosphatidic acid (LPA). This enzyme utilizes acyl-phosphate as fatty acyl donor, but not acyl-CoA or acyl-ACP. The sequence is that of Glycerol-3-phosphate acyltransferase from Streptococcus thermophilus (strain CNRZ 1066).